Consider the following 410-residue polypeptide: ORC1-type DNA replication protein 2 (410 aa).

ATP is bound by residues 60-65, Tyr-213, and Arg-225; that span reads GIGKTT.

This sequence belongs to the CDC6/cdc18 family.

Its function is as follows. Involved in regulation of DNA replication. Binds DNA. The polypeptide is ORC1-type DNA replication protein 2 (orc2) (Aeropyrum pernix (strain ATCC 700893 / DSM 11879 / JCM 9820 / NBRC 100138 / K1)).